The sequence spans 92 residues: Translation initiation factor IF-1 (92 aa).

The 72-residue stretch at 1–72 (MAKEELIQFE…EKGRLIFRHK (72 aa)) folds into the S1-like domain. The tract at residues 69 to 92 (FRHKDERPGGPPRSGPPRGQFRRR) is disordered.

It belongs to the IF-1 family. In terms of assembly, component of the 30S ribosomal translation pre-initiation complex which assembles on the 30S ribosome in the order IF-2 and IF-3, IF-1 and N-formylmethionyl-tRNA(fMet); mRNA recruitment can occur at any time during PIC assembly.

It is found in the cytoplasm. One of the essential components for the initiation of protein synthesis. Stabilizes the binding of IF-2 and IF-3 on the 30S subunit to which N-formylmethionyl-tRNA(fMet) subsequently binds. Helps modulate mRNA selection, yielding the 30S pre-initiation complex (PIC). Upon addition of the 50S ribosomal subunit IF-1, IF-2 and IF-3 are released leaving the mature 70S translation initiation complex. The sequence is that of Translation initiation factor IF-1 from Rhodopseudomonas palustris (strain ATCC BAA-98 / CGA009).